The chain runs to 580 residues: High affinity choline transporter 1 (580 aa).

At 1–6 (MSFHVE) the chain is on the extracellular side. Residues 7-27 (GLVAIILFYLLIFLVGIWAAW) traverse the membrane as a helical segment. Residues 28–48 (KTKNSGNPEERSEAIIVGGRD) lie on the Cytoplasmic side of the membrane. The helical transmembrane segment at 49–69 (IGLLVGGFTMTATWVGGGYIN) threads the bilayer. Residues 70–81 (GTAEAVYGPGCG) are Extracellular-facing. The helical transmembrane segment at 82-102 (LAWAQAPIGYSLSLILGGLFF) threads the bilayer. At 103 to 125 (AKPMRSKGYVTMLDPFQQIYGKR) the chain is on the cytoplasmic side. The chain crosses the membrane as a helical span at residues 126–146 (MGGLLFIPALMGEMFWAAAIF). At 147–164 (SALGATISVIIDVDVNIS) the chain is on the extracellular side. Residues 165 to 185 (VIVSALIAILYTLVGGLYSVA) form a helical membrane-spanning segment. Residues 186–191 (YTDVVQ) are Cytoplasmic-facing. Residues 192–212 (LFCIFIGLWISVPFALSHPAV) traverse the membrane as a helical segment. Residues 213-237 (TDIGFTAVHAKYQSPWLGTIESVEV) are Extracellular-facing. A helical transmembrane segment spans residues 238–258 (YTWLDNFLLLMLGGIPWQAYF). The Cytoplasmic segment spans residues 259 to 274 (QRVLSSSSATYAQVLS). Residues 275-295 (FLAAFGCLVMALPAICIGAIG) form a helical membrane-spanning segment. At 296 to 317 (ASTDWNQTAYGYPDPKTKEEAD) the chain is on the extracellular side. N-linked (GlcNAc...) asparagine glycosylation occurs at Asn-301. Residues 318–338 (MILPIVLQYLCPVYISFFGLG) form a helical membrane-spanning segment. The Cytoplasmic segment spans residues 339–376 (AVSAAVMSSADSSILSASSMFARNIYQLSFRQNASDKE). Residues 377 to 397 (IVWVMRITVLVFGASATAMAL) traverse the membrane as a helical segment. At 398–406 (LTKTVYGLW) the chain is on the extracellular side. A helical transmembrane segment spans residues 407-427 (YLSSDLVYIIIFPQLLCVLFI). Over 428-435 (KGTNTYGA) the chain is Cytoplasmic. A helical membrane pass occupies residues 436 to 456 (VAGYIFGLFLRITGGEPYLYL). Topologically, residues 457 to 481 (QPLIFYPGYYSDKNGIYNQRFPFKT) are extracellular. The chain crosses the membrane as a helical span at residues 482-502 (LSMVTSFFTNICVSYLAKYLF). The mediates interaction with SEC14L1 stretch occupies residues 502–580 (FESGTLPPKL…EGSGTEDNLQ (79 aa)). The Cytoplasmic portion of the chain corresponds to 503-580 (ESGTLPPKLD…EGSGTEDNLQ (78 aa)). The Dileucine-like motif motif lies at 527–532 (DKTILV).

This sequence belongs to the sodium:solute symporter (SSF) (TC 2.A.21) family. Homooligomerizes at cell surface. Interacts with SEC14L1; may regulate SLC5A7. In terms of processing, phosphorylated by PKC and dephosphorylated by PP1/PP2A. Found in spinal cord, brain-stem, mid-brain and striatum. Specific for cholinergic neurons.

The protein localises to the presynaptic cell membrane. It localises to the cell projection. Its subcellular location is the axon. The protein resides in the early endosome membrane. It is found in the cytoplasmic vesicle. The protein localises to the secretory vesicle. It localises to the synaptic vesicle membrane. The catalysed reaction is choline(out) + n Na(+)(out) = choline(in) + n Na(+)(in). Choline uptake activity is regulated by SLC5A7/CHT1 internalization (inactive form) from the cell surface and recycling of internalized SLC5A7/CHT1 into the cell surface (active form). Activated by extracellular chloride ion. Specifically inhibited by nanomolar concentrations of hemicholinium 3. In terms of biological role, high-affinity Na(+)-coupled choline transmembrane symporter. Functions as an electrogenic, voltage-dependent transporter with variable charge/choline stoichiometry. Choline uptake and choline-induced current is also Cl(-)-dependent where Cl(-) is likely a regulatory ion rather than cotransported ion. Plays a critical role in acetylcholine (ACh) synthesis by taking up the substrate choline from the synaptic cleft into the presynaptic nerve terminals after neurotransmitter release. SLC5A7/CHT1-mediated choline high-affinity transport in cholinergic neurons is the rate-limiting step for production of ACh, thereby facilitating communication by subsequent action potentials. Localized predominantly in presynaptic terminal intracellular organelles, and translocated to the plasma membrane in active form in response to neuronal activity. The protein is High affinity choline transporter 1 of Mus musculus (Mouse).